We begin with the raw amino-acid sequence, 134 residues long: S-adenosylmethionine decarboxylase proenzyme (134 aa).

The active-site Schiff-base intermediate with substrate; via pyruvic acid is S64. Residue S64 is modified to Pyruvic acid (Ser); by autocatalysis. Catalysis depends on H69, which acts as the Proton acceptor; for processing activity. The active-site Proton donor; for catalytic activity is the C84.

It belongs to the prokaryotic AdoMetDC family. Type 1 subfamily. In terms of assembly, heterotetramer of two alpha and two beta chains arranged as a dimer of alpha/beta heterodimers. The cofactor is pyruvate. Post-translationally, is synthesized initially as an inactive proenzyme. Formation of the active enzyme involves a self-maturation process in which the active site pyruvoyl group is generated from an internal serine residue via an autocatalytic post-translational modification. Two non-identical subunits are generated from the proenzyme in this reaction, and the pyruvate is formed at the N-terminus of the alpha chain, which is derived from the carboxyl end of the proenzyme. The post-translation cleavage follows an unusual pathway, termed non-hydrolytic serinolysis, in which the side chain hydroxyl group of the serine supplies its oxygen atom to form the C-terminus of the beta chain, while the remainder of the serine residue undergoes an oxidative deamination to produce ammonia and the pyruvoyl group blocking the N-terminus of the alpha chain.

The catalysed reaction is S-adenosyl-L-methionine + H(+) = S-adenosyl 3-(methylsulfanyl)propylamine + CO2. It functions in the pathway amine and polyamine biosynthesis; S-adenosylmethioninamine biosynthesis; S-adenosylmethioninamine from S-adenosyl-L-methionine: step 1/1. In terms of biological role, catalyzes the decarboxylation of S-adenosylmethionine to S-adenosylmethioninamine (dcAdoMet), the propylamine donor required for the synthesis of the polyamines spermine and spermidine from the diamine putrescine. This is S-adenosylmethionine decarboxylase proenzyme from Hydrogenobaculum sp. (strain Y04AAS1).